The primary structure comprises 522 residues: Maturase K (522 aa).

The protein belongs to the intron maturase 2 family. MatK subfamily.

Its subcellular location is the plastid. The protein resides in the chloroplast. Its function is as follows. Usually encoded in the trnK tRNA gene intron. Probably assists in splicing its own and other chloroplast group II introns. The polypeptide is Maturase K (Iris sanguinea (Japanese iris)).